Reading from the N-terminus, the 273-residue chain is ATP synthase subunit a (273 aa).

5 helical membrane passes run 44–64 (WHID…WLFY), 104–124 (IAPL…MDLI), 149–169 (DLNV…FYSI), 223–243 (LIFI…SVPW), and 244–264 (AIFH…LTIV).

It belongs to the ATPase A chain family. F-type ATPases have 2 components, CF(1) - the catalytic core - and CF(0) - the membrane proton channel. CF(1) has five subunits: alpha(3), beta(3), gamma(1), delta(1), epsilon(1). CF(0) has three main subunits: a(1), b(2) and c(9-12). The alpha and beta chains form an alternating ring which encloses part of the gamma chain. CF(1) is attached to CF(0) by a central stalk formed by the gamma and epsilon chains, while a peripheral stalk is formed by the delta and b chains.

The protein resides in the cell inner membrane. Its function is as follows. Key component of the proton channel; it plays a direct role in the translocation of protons across the membrane. This chain is ATP synthase subunit a, found in Shewanella putrefaciens (strain CN-32 / ATCC BAA-453).